The chain runs to 329 residues: Glycerol-3-phosphate dehydrogenase [NAD(P)+] (329 aa).

Residues S13, W14, H34, and K105 each contribute to the NADPH site. Positions 105, 134, and 136 each coordinate sn-glycerol 3-phosphate. Residue A138 participates in NADPH binding. K189, D242, S252, R253, and N254 together coordinate sn-glycerol 3-phosphate. The active-site Proton acceptor is K189. R253 lines the NADPH pocket. The NADPH site is built by V277 and E279.

It belongs to the NAD-dependent glycerol-3-phosphate dehydrogenase family.

The protein localises to the cytoplasm. It carries out the reaction sn-glycerol 3-phosphate + NAD(+) = dihydroxyacetone phosphate + NADH + H(+). The enzyme catalyses sn-glycerol 3-phosphate + NADP(+) = dihydroxyacetone phosphate + NADPH + H(+). Its pathway is membrane lipid metabolism; glycerophospholipid metabolism. In terms of biological role, catalyzes the reduction of the glycolytic intermediate dihydroxyacetone phosphate (DHAP) to sn-glycerol 3-phosphate (G3P), the key precursor for phospholipid synthesis. In Legionella pneumophila (strain Corby), this protein is Glycerol-3-phosphate dehydrogenase [NAD(P)+].